A 935-amino-acid chain; its full sequence is Kinesin heavy chain (935 aa).

Positions 5–329 constitute a Kinesin motor domain; the sequence is NIKVVCRFRP…LRFGARAKSI (325 aa). Residues 87 to 94 and 237 to 244 each bind ATP; these read GQTGSGKT and GSEKVGKT. Positions 342–887 form a coiled coil; it reads AELKALLKKV…SQKSQNSLAA (546 aa). Disordered regions lie at residues 400-419 and 898-935; these read APGF…TPVP and RGNG…MNSR.

The protein belongs to the TRAFAC class myosin-kinesin ATPase superfamily. Kinesin family. Kinesin subfamily.

The protein resides in the cytoplasm. Its subcellular location is the cytoskeleton. Its function is as follows. Kinesin is a microtubule-associated force-producing protein that may play a role in organelle transport. Its motor activity is directed toward the microtubule's plus end. The speed of this motor is 4-5 times faster than its animal counterparts. This Syncephalastrum racemosum (Filamentous fungus) protein is Kinesin heavy chain.